A 209-amino-acid chain; its full sequence is Uracil phosphoribosyltransferase (209 aa).

5-phospho-alpha-D-ribose 1-diphosphate-binding positions include Arg79, Arg104, and 131-139 (DPMLATGGS). Uracil is bound by residues Ile194 and 199–201 (GDA). Asp200 is a binding site for 5-phospho-alpha-D-ribose 1-diphosphate.

The protein belongs to the UPRTase family. The cofactor is Mg(2+).

It catalyses the reaction UMP + diphosphate = 5-phospho-alpha-D-ribose 1-diphosphate + uracil. It participates in pyrimidine metabolism; UMP biosynthesis via salvage pathway; UMP from uracil: step 1/1. Its activity is regulated as follows. Allosterically activated by GTP. In terms of biological role, catalyzes the conversion of uracil and 5-phospho-alpha-D-ribose 1-diphosphate (PRPP) to UMP and diphosphate. This is Uracil phosphoribosyltransferase from Listeria monocytogenes serovar 1/2a (strain ATCC BAA-679 / EGD-e).